The chain runs to 709 residues: Ribosomal RNA large subunit methyltransferase K/L (709 aa).

Residues 43-154 (LAYRITLWTR…NGVITIAMNF (112 aa)) form the THUMP domain.

The protein belongs to the methyltransferase superfamily. RlmKL family.

It localises to the cytoplasm. It carries out the reaction guanosine(2445) in 23S rRNA + S-adenosyl-L-methionine = N(2)-methylguanosine(2445) in 23S rRNA + S-adenosyl-L-homocysteine + H(+). The catalysed reaction is guanosine(2069) in 23S rRNA + S-adenosyl-L-methionine = N(2)-methylguanosine(2069) in 23S rRNA + S-adenosyl-L-homocysteine + H(+). Specifically methylates the guanine in position 2445 (m2G2445) and the guanine in position 2069 (m7G2069) of 23S rRNA. The protein is Ribosomal RNA large subunit methyltransferase K/L of Shewanella sp. (strain W3-18-1).